A 560-amino-acid polypeptide reads, in one-letter code: Choline/ethanolamine transporter FLVCR1 (560 aa).

The tract at residues 1-43 (MARPDDEVGPAVAPGHPLGKGYLPVPKGAPDGEARLVPQNGPE) is disordered. The Cytoplasmic segment spans residues 1 to 92 (MARPDDEVGP…EDVPCPACPP (92 aa)). The chain crosses the membrane as a helical span at residues 93 to 117 (RTALSPRRFVVLLIFSLYSLVNAFQ). Over 118 to 135 (WIQYSSISNVFEDFYEVS) the chain is Extracellular. A helical transmembrane segment spans residues 136–163 (PLHINWLSMVYMVAYVPLIFPATWLLDT). The Cytoplasmic segment spans residues 164–165 (RG). A helical membrane pass occupies residues 166-185 (LRLTALLGSGLNCLGAWVKC). Topologically, residues 186-192 (GSVQRHL) are extracellular. The helical transmembrane segment at 193-221 (FWVTMLGQILCSVAQVFILGLPSPVASVW) threads the bilayer. Gln-207 is a binding site for ethanolamine. Residues 222-226 (FGPKE) lie on the Cytoplasmic side of the membrane. A helical transmembrane segment spans residues 227–252 (VSTACATAVLGNQLGTAVGFLLPPVL). Topologically, residues 253–270 (VPALGTQNNTGLLAHTQN) are extracellular. The N-linked (GlcNAc...) asparagine glycan is linked to Asn-270. Residues 271–300 (NTDLLAHNINTMFYGTAFISTFLFFLTVIA) form a helical membrane-spanning segment. The Cytoplasmic portion of the chain corresponds to 301–336 (FKEKPPLPPSQAQAILRDSPPEEYSYKSSIWNLCRN). Residues 337–367 (IPFVLLLVSYGIMTGAFYSISTLLNQIILTY) traverse the membrane as a helical segment. Topologically, residues 368–371 (YVGE) are extracellular. The chain crosses the membrane as a helical span at residues 372 to 400 (EVNAGRIGLTLVVAGMVGSILCGLWLDYT). The Cytoplasmic portion of the chain corresponds to 401-402 (KT). Residues 403-425 (YKQTTLIVYVLSFIGMLIFTFTL) traverse the membrane as a helical segment. Residues 426–428 (NLG) are Extracellular-facing. A helical transmembrane segment spans residues 429 to 458 (YIVALFFTGGILGFFMTGYLPLGFEFAVEI). Residues 459–466 (TYPESEGM) lie on the Cytoplasmic side of the membrane. Residues 467–492 (SSGLLNTAAQILGIFFTLAQGKITTD) form a helical membrane-spanning segment. Gln-476 contributes to the ethanolamine binding site. A choline-binding site is contributed by Gln-476. At 493 to 495 (YNS) the chain is on the extracellular side. The chain crosses the membrane as a helical span at residues 496-518 (PEAGNIFLCAWMFVGIILTALIK). Residues 519 to 560 (SDLRRHNINTGLTNIDVKAVPVDSRVDPKPKAMVSIQSESSL) lie on the Cytoplasmic side of the membrane. A Phosphoserine modification is found at Ser-542.

It belongs to the major facilitator superfamily. Feline leukemia virus subgroup C receptor (TC 2.A.1.28.1) family.

The protein localises to the cell membrane. The catalysed reaction is choline(out) = choline(in). It carries out the reaction ethanolamine(in) = ethanolamine(out). The enzyme catalyses heme b(in) = heme b(out). Functionally, uniporter that mediates the transport of extracellular choline and ethanolamine into cells, thereby playing a key role in phospholipid biosynthesis. Choline and ethanolamine are the precursors of phosphatidylcholine and phosphatidylethanolamine, respectively, the two most abundant phospholipids. Transport is not coupled with proton transport and is exclusively driven by the choline (or ethanolamine) gradient across the plasma membrane. Also acts as a heme b transporter that mediates heme efflux from the cytoplasm to the extracellular compartment. This Mus terricolor (Earth-colored mouse) protein is Choline/ethanolamine transporter FLVCR1 (Flvcr1).